We begin with the raw amino-acid sequence, 57 residues long: Large ribosomal subunit protein bL33 (57 aa).

This sequence belongs to the bacterial ribosomal protein bL33 family.

This Bifidobacterium longum (strain NCC 2705) protein is Large ribosomal subunit protein bL33.